The sequence spans 144 residues: MATKSCPQCDQQVPVACKSCPCGYIFISRKLLHAKQSQRLPPTSENRSDPKRRRTERIKRERIHTAVNRDLENRKRSRSNSQSEASRRGRGRPKTATTKKHEEEKEKQEKEVDMYANLSDEKAFVFSVALAEINRKIINQRLIL.

Residues 33 to 112 are disordered; the sequence is HAKQSQRLPP…EEKEKQEKEV (80 aa). Residues 35 to 45 show a composition bias toward polar residues; it reads KQSQRLPPTSE. The span at 50 to 62 shows a compositional bias: basic residues; sequence PKRRRTERIKRER. 2 stretches are compositionally biased toward basic and acidic residues: residues 63 to 74 and 99 to 112; these read IHTAVNRDLENR and KKHE…EKEV. Positions 94-122 form a coiled coil; it reads KTATTKKHEEEKEKQEKEVDMYANLSDEK.

It belongs to the UPF0547 family.

The sequence is that of UPF0547 protein C16orf87 homolog from Xenopus laevis (African clawed frog).